Reading from the N-terminus, the 72-residue chain is UPF0352 protein NTHI1007 (72 aa).

It belongs to the UPF0352 family.

The sequence is that of UPF0352 protein NTHI1007 from Haemophilus influenzae (strain 86-028NP).